The following is a 501-amino-acid chain: ATP synthase subunit alpha (501 aa).

169–176 (GDRQTGKT) is an ATP binding site.

This sequence belongs to the ATPase alpha/beta chains family. As to quaternary structure, F-type ATPases have 2 components, CF(1) - the catalytic core - and CF(0) - the membrane proton channel. CF(1) has five subunits: alpha(3), beta(3), gamma(1), delta(1), epsilon(1). CF(0) has three main subunits: a(1), b(2) and c(9-12). The alpha and beta chains form an alternating ring which encloses part of the gamma chain. CF(1) is attached to CF(0) by a central stalk formed by the gamma and epsilon chains, while a peripheral stalk is formed by the delta and b chains.

It localises to the cell membrane. The enzyme catalyses ATP + H2O + 4 H(+)(in) = ADP + phosphate + 5 H(+)(out). Its function is as follows. Produces ATP from ADP in the presence of a proton gradient across the membrane. The alpha chain is a regulatory subunit. The polypeptide is ATP synthase subunit alpha (Streptococcus equi subsp. zooepidemicus (strain H70)).